Here is a 486-residue protein sequence, read N- to C-terminus: GTPase Obg (486 aa).

The Obg domain maps to 2–159 (SRFIDRVVLH…RELVLELKSV (158 aa)). The 181-residue stretch at 160–340 (ADVGLVGFPS…LTFALAKLVA (181 aa)) folds into the OBG-type G domain. GTP is bound by residues 166 to 173 (GFPSAGKS), 191 to 195 (FTTLV), 212 to 215 (DVPG), 292 to 295 (NKAD), and 321 to 323 (SAV). The Mg(2+) site is built by serine 173 and threonine 193. Positions 358-438 (PVISNENSFS…IGNVSFDWEP (81 aa)) constitute an OCT domain. Positions 462–486 (RIGATERKHASRIRRGLEGLDPEDQ) are disordered.

The protein belongs to the TRAFAC class OBG-HflX-like GTPase superfamily. OBG GTPase family. In terms of assembly, monomer. Mg(2+) is required as a cofactor.

Its subcellular location is the cytoplasm. Its function is as follows. An essential GTPase which binds GTP, GDP and possibly (p)ppGpp with moderate affinity, with high nucleotide exchange rates and a fairly low GTP hydrolysis rate. Plays a role in control of the cell cycle, stress response, ribosome biogenesis and in those bacteria that undergo differentiation, in morphogenesis control. The polypeptide is GTPase Obg (Rhodococcus jostii (strain RHA1)).